We begin with the raw amino-acid sequence, 452 residues long: Imidazoleglycerol-phosphate dehydratase (452 aa).

The interval 1 to 233 (MASPVQALLL…VGASVVLTPG (233 aa)) is unknown activity. The segment at 234-452 (LGELLDLVPA…GVPSTKGVLA (219 aa)) is imidazoleglycerol-phosphate dehydratase.

This sequence belongs to the imidazoleglycerol-phosphate dehydratase family.

The enzyme catalyses D-erythro-1-(imidazol-4-yl)glycerol 3-phosphate = 3-(imidazol-4-yl)-2-oxopropyl phosphate + H2O. The protein operates within amino-acid biosynthesis; L-histidine biosynthesis; L-histidine from 5-phospho-alpha-D-ribose 1-diphosphate: step 6/9. The polypeptide is Imidazoleglycerol-phosphate dehydratase (HIS3) (Phytophthora nicotianae (Potato buckeye rot agent)).